A 227-amino-acid chain; its full sequence is PKHD-type hydroxylase Bamb_4479 (227 aa).

Positions Gln-80 to Ser-179 constitute a Fe2OG dioxygenase domain. 3 residues coordinate Fe cation: His-98, Asp-100, and His-160. Arg-170 is a binding site for 2-oxoglutarate.

It depends on Fe(2+) as a cofactor. L-ascorbate serves as cofactor.

The chain is PKHD-type hydroxylase Bamb_4479 from Burkholderia ambifaria (strain ATCC BAA-244 / DSM 16087 / CCUG 44356 / LMG 19182 / AMMD) (Burkholderia cepacia (strain AMMD)).